A 375-amino-acid polypeptide reads, in one-letter code: Actin-binding Rho-activating protein (375 aa).

2 stretches are compositionally biased toward basic and acidic residues: residues 1–11 (MAPGEREREAG) and 79–99 (KPDR…SHIK). 2 disordered regions span residues 1–20 (MAPG…LRKV) and 38–99 (NENS…SHIK). Phosphoserine is present on residues S150 and S182. A compositionally biased stretch (basic and acidic residues) spans 173–182 (QEEPTWKSDS). A disordered region spans residues 173 to 204 (QEEPTWKSDSVDTEDSGYGGDMEERPEQDAAP). Actin-binding stretches follow at residues 193-293 (DMEE…AERA) and 294-375 (KRAE…TLLE). 2 interaction with actin regions span residues 234-279 (SQVD…GDEG) and 346-375 (MRAR…TLLE).

Binds F-actin and ABLIM1, ABLIM2 and ABLIM3. Interaction with ABLIM2 and ABLIM3 enhances activity. In terms of tissue distribution, expressed specifically in heart and skeletal muscle.

Its subcellular location is the cytoplasm. The protein localises to the myofibril. It is found in the sarcomere. The protein resides in the cytoskeleton. Functionally, acts as an activator of serum response factor (SRF)-dependent transcription possibly by inducing nuclear translocation of MKL1 or MKL2 and through a mechanism requiring Rho-actin signaling. In Mus musculus (Mouse), this protein is Actin-binding Rho-activating protein.